Consider the following 438-residue polypeptide: Glutaryl-CoA dehydrogenase, mitochondrial (438 aa).

The transit peptide at 1–44 (MALRGVYAQLLNRGPGLRVFRSWSSATAQTEKGEKTQSRSAKPS) directs the protein to the mitochondrion. Substrate contacts are provided by residues 138–139 (RS) and Ser186. FAD-binding positions include 177–186 (FGLTEPNHGS), Ser186, and 212–214 (WIT). Position 240 is an N6-acetyllysine (Lys240). 287–294 (FGCLNNAR) lines the substrate pocket. FAD is bound by residues Arg319, Gln330, and 387–391 (DMLGG). The Proton acceptor role is filled by Glu414. Gly415 contributes to the substrate binding site. Residues Thr416, 416-418 (THD), and Phe434 each bind FAD.

It belongs to the acyl-CoA dehydrogenase family. Homotetramer. FAD is required as a cofactor.

The protein resides in the mitochondrion matrix. The enzyme catalyses glutaryl-CoA + oxidized [electron-transfer flavoprotein] + 2 H(+) = (2E)-butenoyl-CoA + reduced [electron-transfer flavoprotein] + CO2. Its pathway is amino-acid metabolism; lysine degradation. It functions in the pathway amino-acid metabolism; tryptophan metabolism. In terms of biological role, catalyzes the oxidative decarboxylation of glutaryl-CoA to crotonyl-CoA and CO(2) in the degradative pathway of L-lysine, L-hydroxylysine, and L-tryptophan metabolism. It uses electron transfer flavoprotein as its electron acceptor. The chain is Glutaryl-CoA dehydrogenase, mitochondrial (GCDH) from Bos taurus (Bovine).